The primary structure comprises 348 residues: Ion-translocating oxidoreductase complex subunit D (348 aa).

The next 5 membrane-spanning stretches (helical) occupy residues 15 to 35 (LTAKFMLWVMVAMLPALGMQA), 36 to 56 (YFFGYGVFIQVFIALLLAVAI), 67 to 87 (PTAFYVADLSGVLTALILAIS), 88 to 108 (IPPYAPYWIIVIGIIVALLLA), and 125 to 145 (VAYALLLVSFPVQMTGWLVPI). Thr-186 carries the FMN phosphoryl threonine modification. The next 5 membrane-spanning stretches (helical) occupy residues 212–232 (LFANGWWQINLAFLAGGLLLI), 241–261 (IPAAMLGMFALLSGLTDLLLP), 265–285 (LNVVSQLFSGAMMFGAFFIAT), 298–318 (LIFGGLIGLFVYLIRYYGNYP), and 320–340 (AVAFSVLLANICVPLIDHYTQ).

The protein belongs to the NqrB/RnfD family. The complex is composed of six subunits: RnfA, RnfB, RnfC, RnfD, RnfE and RnfG. It depends on FMN as a cofactor.

Its subcellular location is the cell inner membrane. In terms of biological role, part of a membrane-bound complex that couples electron transfer with translocation of ions across the membrane. The sequence is that of Ion-translocating oxidoreductase complex subunit D from Actinobacillus pleuropneumoniae serotype 5b (strain L20).